The primary structure comprises 59 residues: UPF0337 protein PP_4561 (59 aa).

The segment covering 27-43 (TDNEKLRAEGKAQELKG) has biased composition (basic and acidic residues). The disordered stretch occupies residues 27–59 (TDNEKLRAEGKAQELKGEAQQVKGNVKDAVKKP).

It belongs to the UPF0337 (CsbD) family.

The sequence is that of UPF0337 protein PP_4561 from Pseudomonas putida (strain ATCC 47054 / DSM 6125 / CFBP 8728 / NCIMB 11950 / KT2440).